The chain runs to 732 residues: MSNQKKRNFQIEAFKQRVVVDPKYADKTWKILEHAIHEIYNHNASGLSFEELYRNAYNMVLHKYGDKLYTGLVTTMTFHLKEICKSIEEAQGGAFLELLNRKWNDHNKALQMIRDILMYMDRTYVSTTKKTHVHELGLHLWRDNVVYSSKIQTRLLNTLLDLVHKERTGEVIDRVLMRNVIKMFMDLGESVYQDDFEKPFLEASAEFYKVESMEFIESCDCGEYLKKAEKPLVEEVERVVNYLDAKSEAKITSVVEREMIANHVQRLVHMENSGLVNMLLNDKYEDMGRMYSLFRRVANGLVTVRDVMTLHLREMGKQLVTDPEKSKDPVEFVQRLLDERDKYDRIINMAFNNDKTFQNALNSSFEYFVNLNTRSPEFISLFVDDKLRKGLKGVGEEDVDLILDKVMMLFRYLQEKDVFEKYYKQHLAKRLLSGKTVSDDAERNLIVKLKTECGYQFTSKLEGMFTDMKTSHDTLLGFYNSHPELSEGPTLVVQVLTTGSWPTQPTIQCNLPAEVSVLCEKFRSYYLGTHTGRRLSWQTNMGTADIKAVFGKGQKHELNVSTFQMCVLMLFNNSDRLSYKEIEQATEIPTPDLKRCLQSMACVKGKNVLRKEPMSKEIAEEDWFVVNDRFASKFYKVKIGTVVAQKETEPEKQETRQRVEEDRKPQIEAAIVRIMKSRRVLDHNNIIAEVTKQLQTRFLANPTEIKKRIESLIERDFLERDNTDRKLYRYLA.

The Cullin neddylation domain maps to 662 to 724; the sequence is DRKPQIEAAI…RDFLERDNTD (63 aa). A Glycyl lysine isopeptide (Lys-Gly) (interchain with G-Cter in NEDD8) cross-link involves residue Lys676.

The protein belongs to the cullin family. Interacts with BTB/POZ-MATH proteins BPM1 and BPM3. In terms of processing, neddylated. Deneddylated via its interaction with the COP9 signalosome (CSN) complex.

It participates in protein modification; protein ubiquitination. In terms of biological role, component of the cullin-RING ubiquitin ligases (CRL), or CUL3-RBX1-BTB protein E3 ligase complexes which mediate the ubiquitination and subsequent proteasomal degradation of target proteins. The functional specificity of the CRL complex depends on the BTB domain-containing protein as the substrate recognition component. Involved in embryo pattern formation and endosperm development. Required for the normal division and organization of the root stem cells and columella root cap cells. Regulates primary root growth by an unknown pathway, but in an ethylene-dependent manner. Functions in distal root patterning, by an ethylene-independent mechanism. Functionally redundant with CUL3A. This is Cullin-3B (CUL3B) from Arabidopsis thaliana (Mouse-ear cress).